A 270-amino-acid polypeptide reads, in one-letter code: Putative pyruvate, phosphate dikinase regulatory protein (270 aa).

151–158 (GVSRTSKT) is an ADP binding site.

Belongs to the pyruvate, phosphate/water dikinase regulatory protein family. PDRP subfamily.

The catalysed reaction is N(tele)-phospho-L-histidyl/L-threonyl-[pyruvate, phosphate dikinase] + ADP = N(tele)-phospho-L-histidyl/O-phospho-L-threonyl-[pyruvate, phosphate dikinase] + AMP + H(+). It carries out the reaction N(tele)-phospho-L-histidyl/O-phospho-L-threonyl-[pyruvate, phosphate dikinase] + phosphate + H(+) = N(tele)-phospho-L-histidyl/L-threonyl-[pyruvate, phosphate dikinase] + diphosphate. Bifunctional serine/threonine kinase and phosphorylase involved in the regulation of the pyruvate, phosphate dikinase (PPDK) by catalyzing its phosphorylation/dephosphorylation. This is Putative pyruvate, phosphate dikinase regulatory protein (yqfL) from Bacillus subtilis (strain 168).